Here is a 1031-residue protein sequence, read N- to C-terminus: Receptor-like protein EIX1 (1031 aa).

The first 29 residues, 1–29 (MDKWKYARLAQFLFTLSLLFLETSFGLGG), serve as a signal peptide directing secretion. N30 is a glycosylation site (N-linked (GlcNAc...) asparagine). An N-cap region spans residues 30–113 (NKTLCLDKER…PRLTGKLSPS (84 aa)). Over 30–971 (NKTLCLDKER…DEEEEFPSLE (942 aa)) the chain is Extracellular. One copy of the LRR 1 repeat lies at 117-140 (LEYLNYLDLSVNEFERSEIPRFIG). One copy of the LRR 2; degenerate repeat lies at 142 to 165 (LKRLEYLNLSASFFSGVIPIQFQN). Residues N149 and N165 are each glycosylated (N-linked (GlcNAc...) asparagine). 4 LRR repeats span residues 166–189 (LTSL…WLSH), 191–215 (SSLE…ITKV), 216–240 (PSLK…DLAN), and 243–266 (LISL…SWVF). N-linked (GlcNAc...) asparagine glycosylation occurs at N240. A glycan (N-linked (GlcNAc...) asparagine) is linked at N267. 14 LRR repeats span residues 269–292 (TTSL…RFGT), 293–317 (LMYL…SFGN), 318–341 (LTRL…LFLR), 346–369 (RKSL…ATRF), 370–393 (SSLK…AGQV), 394–416 (STLE…LALF), 417–440 (PSLR…IGKL), 441–463 (SQLR…MGQL), 465–487 (NLES…HLSN), 488–509 (LSSL…SFNW), 512–536 (PFQL…LQNQ), 538–559 (NYTV…WFSS), 561–584 (PPDL…LIEN), and 586–611 (YGYR…NVQI). A glycan (N-linked (GlcNAc...) asparagine) is linked at N317. N-linked (GlcNAc...) asparagine glycosylation is found at N365 and N383. An N-linked (GlcNAc...) asparagine glycan is attached at N487. N538, N568, and N597 each carry an N-linked (GlcNAc...) asparagine glycan. One copy of the LRR 21; degenerate repeat lies at 612-629 (FYLHKNQFFGSISSICRS). 6 LRR repeats span residues 630–654 (RTSP…WMNM), 655–678 (TSLA…LGSL), 679–703 (TNLK…QCQG), 705–725 (QILD…IGTD), 726–750 (LLNL…ICQL), and 752–773 (FLQI…CFNN). Residues N653 and N666 are each glycosylated (N-linked (GlcNAc...) asparagine). N-linked (GlcNAc...) asparagine glycans are attached at residues N773 and N781. LRR repeat units lie at residues 823–847 (LLYL…IADM), 848–871 (RGLK…IGQM), 872–895 (RMLE…LANL), and 896–918 (TFLS…STQL). 3 N-linked (GlcNAc...) asparagine glycosylation sites follow: N854, N861, and N894. The C-cap/acidic domain stretch occupies residues 919–971 (QSFDRSSYSDNAQLCGPPLQECPGYAPPSPLIDHGSNNNPQEHDEEEEFPSLE). The helical transmembrane segment at 972 to 992 (FYISMVLSFFVAFWGILGCLI) threads the bilayer. Residues 993–1031 (VNSSWRNAYFKFLTDTTSWLDMISRVWFARLKKKLRRAR) lie on the Cytoplasmic side of the membrane.

Belongs to the RLP family. In terms of assembly, interacts with EIX elicitor protein.

The protein localises to the cell membrane. Involved in plant defense. Confers resistance to the fungal pathogen T.viride through recognition of the EIX elicitor protein. The protein is Receptor-like protein EIX1 of Solanum lycopersicum (Tomato).